Reading from the N-terminus, the 365-residue chain is 3-isopropylmalate dehydrogenase (365 aa).

NAD(+) is bound at residue 76–89 (GPKWDQNPSELRPE). Residues Arg-96, Arg-106, Arg-134, and Asp-224 each contribute to the substrate site. Asp-224, Asp-248, and Asp-252 together coordinate Mg(2+). 282–294 (GSAPDIAGKGMAN) contacts NAD(+).

It belongs to the isocitrate and isopropylmalate dehydrogenases family. LeuB type 1 subfamily. As to quaternary structure, homodimer. Mg(2+) is required as a cofactor. It depends on Mn(2+) as a cofactor.

It localises to the cytoplasm. It carries out the reaction (2R,3S)-3-isopropylmalate + NAD(+) = 4-methyl-2-oxopentanoate + CO2 + NADH. Its pathway is amino-acid biosynthesis; L-leucine biosynthesis; L-leucine from 3-methyl-2-oxobutanoate: step 3/4. Catalyzes the oxidation of 3-carboxy-2-hydroxy-4-methylpentanoate (3-isopropylmalate) to 3-carboxy-4-methyl-2-oxopentanoate. The product decarboxylates to 4-methyl-2 oxopentanoate. The chain is 3-isopropylmalate dehydrogenase (leuB) from Bacillus subtilis (strain 168).